The chain runs to 669 residues: MAPPYHGDTREFSMAPAKKIKAKIKKTLPVTGPQAPTVSELMHWYCMNTNTHGCRRIVVSRGRLRKFIWILLTLSAVGLILWQCAELIMSYYTASVSVTVQFQKLPFPAVTICNINPYKYSAMKEHLSELDKETKNALETLYGFSEGKSKVRRDAADWNSTGRNMQSKLLEKIPLLKFDDLFKKTATEILSGHKRKIEGSAFHQGSSMVNIGEPQDVVGFQLCDPNNSSDCAVYIFSSGVNAIQEWYKLHYMNIMAQIPLEMKVNMGYSAEDLLLTCFFDGISCDSRNFTPFHHPLYGNCYTFNSGENGTILTTSTGGSEYGLQVVLYVEEADYNPFLVTSTGAKIIVHDQDEYPFIEDIGTEIETAMATSIGMHFTRSHKLSQPYSDCTETGNDIPVANLYNKSYSLQICLHSCFQRAMVDTCGCAQYAQPLPPGAEYCNYKKYPNWMYCYYKLHEKFVKEQLGCQQICKESCSFKEWTLTTSLAQWPSSVSEDWMLRVLSWDKRQKINKMLNKTDLANLVVFYKDLNERFISENPANNLVILLSNFGGQLGLWMSCSMVCVIEIIEVFFIDSFSIVMRRRWQKMKKWWNDRKAPRPQEPPQVNAPAKEGHDNPVCTDEDLPTFNTALRLPLPQENHMPRTPPPNYSTLQLNAAFTDQLPDTLEGRSH.

Topologically, residues 1–67 (MAPPYHGDTR…VVSRGRLRKF (67 aa)) are cytoplasmic. A helical transmembrane segment spans residues 68 to 88 (IWILLTLSAVGLILWQCAELI). Residues 89 to 551 (MSYYTASVSV…VILLSNFGGQ (463 aa)) lie on the Extracellular side of the membrane. Cystine bridges form between cysteine 113/cysteine 300, cysteine 223/cysteine 231, cysteine 277/cysteine 284, cysteine 389/cysteine 474, cysteine 411/cysteine 470, cysteine 415/cysteine 466, cysteine 424/cysteine 451, and cysteine 426/cysteine 440. Residues 552–572 (LGLWMSCSMVCVIEIIEVFFI) traverse the membrane as a helical segment. Topologically, residues 573–669 (DSFSIVMRRR…LPDTLEGRSH (97 aa)) are cytoplasmic. The tract at residues 592 to 619 (DRKAPRPQEPPQVNAPAKEGHDNPVCTD) is disordered.

It belongs to the amiloride-sensitive sodium channel (TC 1.A.6) family. SCNN1G subfamily. In terms of assembly, component of the heterotrimeric epithelial sodium channel (ENaC) composed of an alpha/SCNN1A, a beta/SCNN1B and a gamma/SCNN1G subunit.

The protein resides in the apical cell membrane. The enzyme catalyses Na(+)(in) = Na(+)(out). With respect to regulation, originally identified and characterized by its inhibition by the diuretic drug amiloride. Functionally, this is one of the three pore-forming subunits of the heterotrimeric epithelial sodium channel (ENaC), a critical regulator of sodium balance and fluid homeostasis. ENaC operates in epithelial tissues, where it mediates the electrodiffusion of sodium ions from extracellular fluid through the apical membrane of cells, with water following osmotically. The sequence is that of Epithelial sodium channel subunit gamma from Pelodiscus sinensis (Chinese softshell turtle).